The sequence spans 418 residues: Creatine kinase U-type, mitochondrial (418 aa).

Residues 1 to 39 constitute a mitochondrion transit peptide; that stretch reads MAGPFSRLLSARPGLKLLALAGAGSLAAGILLRPESVRA. The cardiolipin-binding stretch occupies residues 40–64; sequence ATGERRRLYPPSAEYPDLRKHNNCM. The Phosphagen kinase N-terminal domain occupies 46–132; that stretch reads RLYPPSAEYP…FDPVIQERHN (87 aa). A Phosphoserine modification is found at Ser-152. Residues 159-401 enclose the Phosphagen kinase C-terminal domain; that stretch reads YVLSSRVRTG…NYLIDCERRL (243 aa). 162 to 166 serves as a coordination point for ATP; the sequence is SSRVR. A Phosphoserine modification is found at Ser-197. Thr-214 is subject to Phosphothreonine. His-225 lines the ATP pocket. Position 233 is a phosphoserine (Ser-233). Residues Arg-270, Arg-326, 354–359, and Asp-369 each bind ATP; that span reads RGTGGV. Phosphothreonine is present on Thr-356.

It belongs to the ATP:guanido phosphotransferase family. As to quaternary structure, exists as an octamer composed of four MTCK homodimers. As to expression, in many tissues, with highest levels in brain gut and kidney. In the kidney localized primarily in the outer medulla in the thick ascending limb and distal convoluted tubule.

The protein resides in the mitochondrion inner membrane. It catalyses the reaction creatine + ATP = N-phosphocreatine + ADP + H(+). In terms of biological role, reversibly catalyzes the transfer of phosphate between ATP and various phosphogens (e.g. creatine phosphate). Creatine kinase isoenzymes play a central role in energy transduction in tissues with large, fluctuating energy demands, such as skeletal muscle, heart, brain and spermatozoa. This is Creatine kinase U-type, mitochondrial (Ckmt1) from Rattus norvegicus (Rat).